A 357-amino-acid chain; its full sequence is Phenylalanine--tRNA ligase alpha subunit (357 aa).

A Mg(2+)-binding site is contributed by Glu-257.

It belongs to the class-II aminoacyl-tRNA synthetase family. Phe-tRNA synthetase alpha subunit type 1 subfamily. As to quaternary structure, tetramer of two alpha and two beta subunits. Mg(2+) is required as a cofactor.

It is found in the cytoplasm. The enzyme catalyses tRNA(Phe) + L-phenylalanine + ATP = L-phenylalanyl-tRNA(Phe) + AMP + diphosphate + H(+). This is Phenylalanine--tRNA ligase alpha subunit from Ruegeria pomeroyi (strain ATCC 700808 / DSM 15171 / DSS-3) (Silicibacter pomeroyi).